The sequence spans 119 residues: Flagellar transcriptional regulator FlhD (119 aa).

This sequence belongs to the FlhD family. As to quaternary structure, homodimer; disulfide-linked. Forms a heterohexamer composed of two FlhC and four FlhD subunits. Each FlhC binds a FlhD dimer, forming a heterotrimer, and a hexamer assembles by dimerization of two heterotrimers.

The protein localises to the cytoplasm. Functionally, functions in complex with FlhC as a master transcriptional regulator that regulates transcription of several flagellar and non-flagellar operons by binding to their promoter region. Activates expression of class 2 flagellar genes, including fliA, which is a flagellum-specific sigma factor that turns on the class 3 genes. Also regulates genes whose products function in a variety of physiological pathways. This chain is Flagellar transcriptional regulator FlhD, found in Yersinia enterocolitica.